We begin with the raw amino-acid sequence, 704 residues long: Ion-translocating oxidoreductase complex subunit C (704 aa).

4Fe-4S ferredoxin-type domains are found at residues 368–397 (MGAP…QQLY) and 407–436 (KATA…VQYF). 8 residues coordinate [4Fe-4S] cluster: Cys-377, Cys-380, Cys-383, Cys-387, Cys-416, Cys-419, Cys-422, and Cys-426. Residues 536–685 (RAKQAAHPMA…ADPRKAAVAA (150 aa)) form a disordered region. Positions 556–565 (KAAVEAAIAR) are enriched in low complexity.

The protein belongs to the 4Fe4S bacterial-type ferredoxin family. RnfC subfamily. The complex is composed of six subunits: RsxA, RsxB, RsxC, RsxD, RsxE and RsxG. Requires [4Fe-4S] cluster as cofactor.

Its subcellular location is the cell inner membrane. Functionally, part of a membrane-bound complex that couples electron transfer with translocation of ions across the membrane. Required to maintain the reduced state of SoxR. This chain is Ion-translocating oxidoreductase complex subunit C, found in Salmonella dublin (strain CT_02021853).